The primary structure comprises 313 residues: Olfactory receptor 4Q3 (313 aa).

Over 1–25 the chain is Extracellular; it reads MKKEQDSNVTEFVLLGLSSSWELQL. Asn8 is a glycosylation site (N-linked (GlcNAc...) asparagine). The chain crosses the membrane as a helical span at residues 26 to 49; that stretch reads FLFLLFLFFYIAIVLGNLLIVVTV. The Cytoplasmic portion of the chain corresponds to 50 to 58; sequence QAHAHLLQS. The chain crosses the membrane as a helical span at residues 59-80; it reads PMYYFLGHLSFIDLCLSCVTVP. The Extracellular portion of the chain corresponds to 81–101; the sequence is KMLGDFLQQGKSISFSGCLAQ. A disulfide bridge connects residues Cys98 and Cys190. The chain crosses the membrane as a helical span at residues 102-121; the sequence is IYFLHFLGASEMFLLTVMAY. The Cytoplasmic segment spans residues 122–140; sequence DRYVAICNPLRYLTVMNPQ. The chain crosses the membrane as a helical span at residues 141-159; the sequence is LCLWLVLACWCGGFIHSIM. Topologically, residues 160–196 are extracellular; it reads QVILVIQLPFCGPNELDNFYCDVPQVIKLACMDTYVV. A helical transmembrane segment spans residues 197–220; the sequence is EVLVIANSGLLSLVCFLVLLFSYA. Residues 221-236 are Cytoplasmic-facing; sequence IILITLRTHFCQGQNK. A helical transmembrane segment spans residues 237–259; it reads VFSTCASHLTVVSLIFVPCVFIY. Over 260-270 the chain is Extracellular; sequence LRPFCSFSVDK. A helical membrane pass occupies residues 271 to 290; it reads IFSLFYTVITPMLNPLIYTL. The Cytoplasmic segment spans residues 291 to 313; that stretch reads RNTDMKTAMKKLRIKPCGIPLPC.

This sequence belongs to the G-protein coupled receptor 1 family.

It is found in the cell membrane. Odorant receptor. The protein is Olfactory receptor 4Q3 (OR4Q3) of Homo sapiens (Human).